A 2415-amino-acid polypeptide reads, in one-letter code: Spectrin alpha chain (2415 aa).

9 Spectrin repeats span residues 48-150 (RFQY…KLQQ), 154-254 (LVQF…QEKL), 258-362 (HEIQ…KLDE), 366-464 (LHRF…DRRI), 471-574 (DLQL…LLED), 577-679 (RYQQ…KLNE), 683-784 (QQQF…QHLL), 788-890 (QVQQ…QDLD), and 894-963 (QAHQ…RQQE). Positions 970-1029 (TGKECVVALYDYTEKSPREVSMKKGDVLTLLNSNNKDWWKVEVNDRQGFVPAAYIKKIDA) constitute an SH3 domain. 2 positions are modified to phosphoserine: S1032 and S1034. Spectrin repeat units lie at residues 1079–1177 (VREA…ASQL), 1181–1284 (HEVQ…EKLL), 1287–1391 (YDLQ…QLEQ), 1394–1496 (DLQL…SRLG), 1500–1604 (TLQQ…KLKE), 1608–1710 (QRTY…RLNE), 1714–1816 (LHQF…KLDE), 1820–1921 (YQQF…GALL), 1926–2028 (YLQF…DRLL), 2040–2141 (LYLT…DGEL), and 2154–2252 (LRKE…NLEQ). EF-hand domains are found at residues 2265–2300 (DSLK…LGYD) and 2308–2343 (QPDP…KETE). Residues D2278, D2280, S2282, K2284, E2289, D2321, N2323, D2325, Y2327, and E2332 each coordinate Ca(2+).

The protein belongs to the spectrin family. Native spectrin molecule is a tetramer composed of two antiparallel heterodimers joined head to head so that each end of the native molecule includes the C-terminus of the alpha subunit and the N-terminus of the beta subunit. Interacts with calmodulin in a calcium-dependent manner, interacts with F-actin and also interacts with Lva. Interacts with Ten-m. In terms of tissue distribution, a substantial pool of maternal protein in the egg undergoes dynamic changes in distribution early in embryogenesis. In gastrulated embryo, the highest level of protein is found in the respiratory tract cells and the lowest in parts of the forming gut.

The protein localises to the cytoplasm. It is found in the cytoskeleton. Its subcellular location is the golgi apparatus. It localises to the cell projection. The protein resides in the cilium. The protein localises to the flagellum. Its function is as follows. Spectrin is the major constituent of the cytoskeletal network underlying the erythrocyte plasma membrane. It associates with band 4.1 and actin to form the cytoskeletal superstructure of the erythrocyte plasma membrane. Essential for larval survival and development. Stabilizes cell to cell interactions that are critical for the maintenance of cell shape and subcellular organization within embryonic tissues. Lva and spectrin may form a Golgi-based scaffold that mediates interaction of Golgi bodies with microtubules and facilitates Golgi-derived membrane secretion required for the formation of furrows during cellularization. The chain is Spectrin alpha chain (alpha-Spec) from Drosophila melanogaster (Fruit fly).